The following is a 607-amino-acid chain: UvrABC system protein C (607 aa).

A GIY-YIG domain is found at 15–93 (SEPGVYCMLD…IKKYQPRYNI (79 aa)). Positions 202–237 (HEVIADLIKKMEAASQQLNFELAAKVRDQIMLLRKM) constitute a UVR domain.

The protein belongs to the UvrC family. As to quaternary structure, interacts with UvrB in an incision complex.

The protein resides in the cytoplasm. Functionally, the UvrABC repair system catalyzes the recognition and processing of DNA lesions. UvrC both incises the 5' and 3' sides of the lesion. The N-terminal half is responsible for the 3' incision and the C-terminal half is responsible for the 5' incision. The protein is UvrABC system protein C of Pseudoalteromonas translucida (strain TAC 125).